The primary structure comprises 455 residues: MWLELILASVLGFVIYWFVSRDKEETLPLEDGWWGPGSKPSAKEDESIRPFKVETSDEEIKDLHQRIDRFRASPPLEGSRFHYGFNSSYLKKVVSFWRNEFDWRKQVEILNQYPHFKTKIEGLDIHFIHVKPPQLPSGRTPKPLLMVHGWPGSFYEFYKIIPLLTDPKTHGLSDEHVFEVICPSIPGYGFSEASSKKGLNSVATARIFYKLMSRLGFQKFYIQGGDWGSLICTNIAQMVPNHVKGLHLNMSFISRNIYSLTPLLGQRFGRFLGYTEKDLELLYPFKEKVFYNIMRESGYLHIQATKPDTVGCALNDSPVGLAAYILEKFSTWTKSEYRELEDGGLERKFSLEDLLTNIMIYWTTGTIVSSQRFYKENLGQGVMVHRHEGMKVFVPTGYSAFPSEILHAPEKWVKVKYPKLISYSYMERGGHFAAFEEPKLLAQDIRKFVSLAELQ.

Residues 1 to 21 (MWLELILASVLGFVIYWFVSR) form a helical; Signal-anchor for type III membrane protein membrane-spanning segment. At 22–455 (DKEETLPLED…RKFVSLAELQ (434 aa)) the chain is on the cytoplasmic side. D226 functions as the Nucleophile in the catalytic mechanism. Residue R295 is modified to Dimethylated arginine. The active-site Proton donor is the Y374. H431 acts as the Proton acceptor in catalysis. The residue at position 439 (K439) is an N6-acetyllysine.

Belongs to the peptidase S33 family.

The protein resides in the microsome membrane. The protein localises to the endoplasmic reticulum membrane. The enzyme catalyses cis-stilbene oxide + H2O = (1R,2R)-hydrobenzoin. It carries out the reaction 1-(4-methoxyphenyl)-N-methyl-N-[(3-methyloxetan-3-yl)methyl]methanamine + H2O = 2-{[(4-methoxybenzyl)(methyl)amino]methyl}-2-methylpropane-1,3-diol. It catalyses the reaction 8,9-epoxy-(5Z,11Z,14Z)-eicosatrienoate + H2O = 8,9-dihydroxy-(5Z,11Z,14Z)-eicosatrienoate. The catalysed reaction is 11,12-epoxy-(5Z,8Z,14Z)-eicosatrienoate + H2O = 11,12-dihydroxy-(5Z,8Z,14Z)-eicosatrienoate. The enzyme catalyses 2-(5Z,8Z,11Z,14Z-eicosatetraenoyl)-glycerol + H2O = glycerol + (5Z,8Z,11Z,14Z)-eicosatetraenoate + H(+). Its activity is regulated as follows. Inhibited by 10-hydroxystearamide and methoxy-arachidonyl fluorophosphate. Biotransformation enzyme that catalyzes the hydrolysis of arene and aliphatic epoxides to less reactive and more water soluble dihydrodiols by the trans addition of water. May play a role in the metabolism of endogenous lipids such as epoxide-containing fatty acids. Metabolizes the abundant endocannabinoid 2-arachidonoylglycerol (2-AG) to free arachidonic acid (AA) and glycerol. Binds 20(S)-hydroxycholesterol (20(S)-OHC). This is Epoxide hydrolase 1 from Mus musculus (Mouse).